A 171-amino-acid chain; its full sequence is RNA silencing suppressor p19 (171 aa).

The segment covering 1–15 (MERAIPGNDTREPAY) has biased composition (basic and acidic residues). The tract at residues 1–32 (MERAIPGNDTREPAYGERWNGGPGGSTSPFQL) is disordered.

The protein belongs to the tombusvirus protein p19 family. As to quaternary structure, homodimer.

Viral suppressor of RNA silencing which binds specifically to silencing RNAs (siRNAs). Acts as a molecular caliper to specifically select siRNAs based on the length of the duplex region of the RNA. The protein is RNA silencing suppressor p19 of Capsicum annuum (Capsicum pepper).